A 210-amino-acid polypeptide reads, in one-letter code: Thiamine-phosphate synthase (210 aa).

4-amino-2-methyl-5-(diphosphooxymethyl)pyrimidine-binding positions include 43 to 47 and Asn75; that span reads QLREK. The Mg(2+) site is built by Asp76 and Asp95. Ser114 lines the 4-amino-2-methyl-5-(diphosphooxymethyl)pyrimidine pocket. Residue 140 to 142 participates in 2-[(2R,5Z)-2-carboxy-4-methylthiazol-5(2H)-ylidene]ethyl phosphate binding; sequence TST. Lys143 contributes to the 4-amino-2-methyl-5-(diphosphooxymethyl)pyrimidine binding site. 2-[(2R,5Z)-2-carboxy-4-methylthiazol-5(2H)-ylidene]ethyl phosphate-binding positions include Gly170 and 190-191; that span reads IS.

Belongs to the thiamine-phosphate synthase family. Requires Mg(2+) as cofactor.

It catalyses the reaction 2-[(2R,5Z)-2-carboxy-4-methylthiazol-5(2H)-ylidene]ethyl phosphate + 4-amino-2-methyl-5-(diphosphooxymethyl)pyrimidine + 2 H(+) = thiamine phosphate + CO2 + diphosphate. The enzyme catalyses 2-(2-carboxy-4-methylthiazol-5-yl)ethyl phosphate + 4-amino-2-methyl-5-(diphosphooxymethyl)pyrimidine + 2 H(+) = thiamine phosphate + CO2 + diphosphate. It carries out the reaction 4-methyl-5-(2-phosphooxyethyl)-thiazole + 4-amino-2-methyl-5-(diphosphooxymethyl)pyrimidine + H(+) = thiamine phosphate + diphosphate. The protein operates within cofactor biosynthesis; thiamine diphosphate biosynthesis; thiamine phosphate from 4-amino-2-methyl-5-diphosphomethylpyrimidine and 4-methyl-5-(2-phosphoethyl)-thiazole: step 1/1. Functionally, condenses 4-methyl-5-(beta-hydroxyethyl)thiazole monophosphate (THZ-P) and 2-methyl-4-amino-5-hydroxymethyl pyrimidine pyrophosphate (HMP-PP) to form thiamine monophosphate (TMP). The polypeptide is Thiamine-phosphate synthase (Clostridioides difficile (strain 630) (Peptoclostridium difficile)).